A 738-amino-acid chain; its full sequence is Catalase-peroxidase (738 aa).

The segment at 1–24 (MSEEHPPIAEANSQPSNGCPVAGG) is disordered. A cross-link (tryptophyl-tyrosyl-methioninium (Trp-Tyr) (with M-257)) is located at residues 108 to 231 (WHAAGTYRVG…LAAVQMGLIY (124 aa)). His109 functions as the Proton acceptor in the catalytic mechanism. Positions 231-257 (YVNPEGPNGNPDPLAAAIDIRETFGRM) form a cross-link, tryptophyl-tyrosyl-methioninium (Tyr-Met) (with W-108). Residue His272 coordinates heme b.

The protein belongs to the peroxidase family. Peroxidase/catalase subfamily. Homodimer or homotetramer. The cofactor is heme b. Post-translationally, formation of the three residue Trp-Tyr-Met cross-link is important for the catalase, but not the peroxidase activity of the enzyme.

It catalyses the reaction H2O2 + AH2 = A + 2 H2O. The catalysed reaction is 2 H2O2 = O2 + 2 H2O. Its function is as follows. Bifunctional enzyme with both catalase and broad-spectrum peroxidase activity. This is Catalase-peroxidase from Mycobacteroides abscessus (strain ATCC 19977 / DSM 44196 / CCUG 20993 / CIP 104536 / JCM 13569 / NCTC 13031 / TMC 1543 / L948) (Mycobacterium abscessus).